The sequence spans 688 residues: PTS system glucoside-specific EIICBA component (688 aa).

The PTS EIIC type-1 domain maps to 3 to 427; that stretch reads KKLFGQLQRI…FKLKTPGRED (425 aa). Transmembrane regions (helical) follow at residues 12 to 32, 81 to 101, 137 to 157, 182 to 202, 223 to 243, 284 to 304, 315 to 335, 340 to 360, 364 to 384, and 395 to 415; these read IGKA…LLAF, LGLA…YLIM, LVLG…MGAL, FVPI…SFAW, LTTF…LHHI, AFTT…AFAI, IVGG…ITEP, FLFV…TSFL, LLGV…ILYG, and LVIP…DFAI. Residues 438–519 form the PTS EIIB type-1 domain; sequence AKLPFDVLDA…AKIMSGEITK (82 aa). Residue cysteine 460 is the Phosphocysteine intermediate; for EIIB activity of the active site. The region spanning 560–664 is the PTS EIIA type-1 domain; that stretch reads DQVFAGKMMG…SIVTPMIITN (105 aa). The active-site Tele-phosphohistidine intermediate; for EIIA activity is histidine 612.

Its subcellular location is the cell membrane. Its function is as follows. The phosphoenolpyruvate-dependent sugar phosphotransferase system (sugar PTS), a major carbohydrate active -transport system, catalyzes the phosphorylation of incoming sugar substrates concomitantly with their translocation across the cell membrane. This system is involved in alpha- and beta-glucoside transport. This is PTS system glucoside-specific EIICBA component (glcB) from Staphylococcus aureus (strain MRSA252).